A 270-amino-acid chain; its full sequence is Feruloyl esterase C (270 aa).

The first 21 residues, 1 to 21 (MLRAVLLPTLLAFGAFTPVHG), serve as a signal peptide directing secretion.

It belongs to the faeC family.

It is found in the secreted. It carries out the reaction feruloyl-polysaccharide + H2O = ferulate + polysaccharide.. In terms of biological role, involved in degradation of plant cell walls. Hydrolyzes the feruloyl-arabinose ester bond in arabinoxylans, and the feruloyl-galactose ester bond in pectin. Active against paranitrophenyl-acetate, methyl ferulate and wheat arabinoxylan. In Emericella nidulans (strain FGSC A4 / ATCC 38163 / CBS 112.46 / NRRL 194 / M139) (Aspergillus nidulans), this protein is Feruloyl esterase C (faeC).